The sequence spans 101 residues: Small ribosomal subunit protein uS14 (101 aa).

Belongs to the universal ribosomal protein uS14 family. As to quaternary structure, part of the 30S ribosomal subunit. Contacts proteins S3 and S10.

Binds 16S rRNA, required for the assembly of 30S particles and may also be responsible for determining the conformation of the 16S rRNA at the A site. The protein is Small ribosomal subunit protein uS14 of Polynucleobacter asymbioticus (strain DSM 18221 / CIP 109841 / QLW-P1DMWA-1) (Polynucleobacter necessarius subsp. asymbioticus).